Here is a 209-residue protein sequence, read N- to C-terminus: Histidine biosynthesis bifunctional protein HisIE (209 aa).

The phosphoribosyl-AMP cyclohydrolase stretch occupies residues 1 to 123; the sequence is MEIEKLLEQV…VLPIDYSLSI (123 aa). Residues 124-209 are phosphoribosyl-ATP pyrophosphohydrolase; the sequence is LKELEEIIKR…VMNELRRRRK (86 aa).

The protein in the N-terminal section; belongs to the PRA-CH family. It in the C-terminal section; belongs to the PRA-PH family.

It localises to the cytoplasm. The catalysed reaction is 1-(5-phospho-beta-D-ribosyl)-ATP + H2O = 1-(5-phospho-beta-D-ribosyl)-5'-AMP + diphosphate + H(+). The enzyme catalyses 1-(5-phospho-beta-D-ribosyl)-5'-AMP + H2O = 1-(5-phospho-beta-D-ribosyl)-5-[(5-phospho-beta-D-ribosylamino)methylideneamino]imidazole-4-carboxamide. Its pathway is amino-acid biosynthesis; L-histidine biosynthesis; L-histidine from 5-phospho-alpha-D-ribose 1-diphosphate: step 2/9. The protein operates within amino-acid biosynthesis; L-histidine biosynthesis; L-histidine from 5-phospho-alpha-D-ribose 1-diphosphate: step 3/9. This chain is Histidine biosynthesis bifunctional protein HisIE (hisI), found in Pyrococcus furiosus (strain ATCC 43587 / DSM 3638 / JCM 8422 / Vc1).